Consider the following 413-residue polypeptide: MKGSNTFRWAIAIGVVVAAAAFWFWHSRSESPTAAPGVAAQAPHTAAAGRRGMRDGPLAPVQAATATTQAVPRYLSGLGTVTAANTVTVRSRVDGQLIALHFQEGQQVNAGDLLAQIDPSQFKVALAQAQGQLAKDNATLANARRDLARYQQLAKTNLVSRQELDAQQALVNETQGTIKADEANVASAQLQLDWSRITAPVSGRVGLKQVDVGNQISSSDTAGIVVITQTHPIDLIFTLPESDIATVVQAQKAGKTLVVEAWDRTNSHKLSEGVLLSLDNQIDPTTGTIKIKARFTNQDDTLFPNQFVNARMLVDTEQNAVVVPAAAVQMGNEGHFVWVLNDENNVSKKRVKIGIQDNRNVVISAGLSAGDRVVTDGIDRLTEGAKVEVVEPQTTMADEKSPSRHEGQKGARA.

An N-terminal signal peptide occupies residues 1-20 (MKGSNTFRWAIAIGVVVAAA). 2 disordered regions span residues 31-57 (SPTA…RDGP) and 391-413 (EPQT…GARA). Positions 397 to 413 (ADEKSPSRHEGQKGARA) are enriched in basic and acidic residues.

It belongs to the membrane fusion protein (MFP) (TC 8.A.1) family. Part of a tripartite efflux system composed of MdtA, MdtB and MdtC.

It localises to the cell inner membrane. This chain is Multidrug resistance protein MdtA, found in Salmonella paratyphi C (strain RKS4594).